The primary structure comprises 295 residues: 33 kDa chaperonin (295 aa).

2 disulfide bridges follow: Cys-238–Cys-240 and Cys-271–Cys-274.

This sequence belongs to the HSP33 family. In terms of processing, under oxidizing conditions two disulfide bonds are formed involving the reactive cysteines. Under reducing conditions zinc is bound to the reactive cysteines and the protein is inactive.

The protein localises to the cytoplasm. Redox regulated molecular chaperone. Protects both thermally unfolding and oxidatively damaged proteins from irreversible aggregation. Plays an important role in the bacterial defense system toward oxidative stress. This is 33 kDa chaperonin from Clostridium botulinum (strain Alaska E43 / Type E3).